A 300-amino-acid polypeptide reads, in one-letter code: GTPase Era (300 aa).

Positions 4-173 (KYGIVAIVGK…INTIKQYLHK (170 aa)) constitute an Era-type G domain. The segment at 12–19 (GKPNVGKS) is G1. 12-19 (GKPNVGKS) lines the GTP pocket. Positions 38 to 42 (QTTRN) are G2. Positions 59-62 (DTPG) are G3. Residues 59–63 (DTPGF) and 122–125 (SKAE) contribute to the GTP site. The G4 stretch occupies residues 122–125 (SKAE). Residues 152–154 (ISA) are G5. The KH type-2 domain maps to 204-282 (LNHEVPHGVG…SLTIFVKVEN (79 aa)).

Belongs to the TRAFAC class TrmE-Era-EngA-EngB-Septin-like GTPase superfamily. Era GTPase family. In terms of assembly, monomer.

Its subcellular location is the cytoplasm. The protein localises to the cell membrane. Its function is as follows. An essential GTPase that binds both GDP and GTP, with rapid nucleotide exchange. Plays a role in 16S rRNA processing and 30S ribosomal subunit biogenesis and possibly also in cell cycle regulation and energy metabolism. This Ureaplasma urealyticum serovar 10 (strain ATCC 33699 / Western) protein is GTPase Era.